The sequence spans 109 residues: Flagellar hook-basal body complex protein FliE (109 aa).

The protein belongs to the FliE family.

The protein localises to the bacterial flagellum basal body. The chain is Flagellar hook-basal body complex protein FliE from Pseudomonas aeruginosa (strain LESB58).